The sequence spans 73 residues: U-scoloptoxin(03)-Ssd1b (73 aa).

The first 23 residues, 1 to 23 (MKSSMAVLLVMGLIIFTLDKCYS), serve as a signal peptide directing secretion.

Contains 3 disulfide bonds. In terms of tissue distribution, expressed by the venom gland.

The protein localises to the secreted. The polypeptide is U-scoloptoxin(03)-Ssd1b (Scolopendra dehaani (Thai centipede)).